Here is a 99-residue protein sequence, read N- to C-terminus: U2-theraphotoxin-Lsp1a (99 aa).

A signal peptide spans 1 to 22 (MNTIQVIIFAVVLVLTVTVGQA). Positions 23–57 (DEDSPEASLLRKLKEAEASLFGQNLEESRNSRQKR) are excised as a propeptide. 3 disulfides stabilise this stretch: cysteine 58/cysteine 73, cysteine 65/cysteine 78, and cysteine 72/cysteine 93.

The protein belongs to the neurotoxin 14 (magi-1) family. 08 (Ltx-4) subfamily. As to expression, expressed by the venom gland.

Its subcellular location is the secreted. Its function is as follows. Insecticidal neurotoxin. This Lasiodora sp. (strain IBSP 8539) (Brazilian salmon pink birdeater) protein is U2-theraphotoxin-Lsp1a.